We begin with the raw amino-acid sequence, 644 residues long: DNA mismatch repair protein MutL (644 aa).

2 disordered regions span residues 353–399 (SESG…SQLT) and 420–440 (GSMA…RARA). The span at 370 to 381 (SPESKTHSTWNE) shows a compositional bias: polar residues. Residues 383–399 (SRVDTSRVEISRDSQLT) are compositionally biased toward basic and acidic residues.

The protein belongs to the DNA mismatch repair MutL/HexB family.

In terms of biological role, this protein is involved in the repair of mismatches in DNA. It is required for dam-dependent methyl-directed DNA mismatch repair. May act as a 'molecular matchmaker', a protein that promotes the formation of a stable complex between two or more DNA-binding proteins in an ATP-dependent manner without itself being part of a final effector complex. The chain is DNA mismatch repair protein MutL from Shewanella sp. (strain MR-4).